The primary structure comprises 211 residues: Bacteriorhodopsin (211 aa).

A helical membrane pass occupies residues 1–19 (IWLWLGTAGMFLGMLYFIA). Topologically, residues 20–33 (RGWGETDSRRQKFY) are cytoplasmic. Residues 34–52 (IATILITAIAFVNYLAMAL) form a helical membrane-spanning segment. Residues 53 to 68 (GFGLTIVEFAGEEHPI) are Extracellular-facing. A helical transmembrane segment spans residues 69–86 (YWARYSDWLFTTPLLLYD). At 87–97 (LGLLAGADRNT) the chain is on the cytoplasmic side. The helical transmembrane segment at 98–117 (ITSLVSLDVLMIGTGLVATL) threads the bilayer. Over 118 to 130 (SAGSGVLSAGAER) the chain is Extracellular. Residues 131–150 (LVWWGISTAFLLVLLYFLFS) traverse the membrane as a helical segment. Over 151–168 (SLSGRVADLPSDTRSTFK) the chain is Cytoplasmic. A helical transmembrane segment spans residues 169–187 (TLRNLVTVVWLVYPVWWLI). At 188–199 (GTEGIGLVGIGI) the chain is on the extracellular side. A helical transmembrane segment spans residues 200 to 211 (ETAGFMVIDLTA).

It belongs to the archaeal/bacterial/fungal opsin family.

The protein resides in the cell membrane. Light-driven proton pump. The protein is Bacteriorhodopsin (bop) of Halobacterium halobium (strain port).